The following is a 383-amino-acid chain: Arginine biosynthesis bifunctional protein ArgJ 1 (383 aa).

The disordered stretch occupies residues 1–25 (MTVTAPKGSTGGGCRRGSKESGQPD). The substrate site is built by T146, K168, T179, E259, N378, and S383. T179 serves as the catalytic Nucleophile.

Belongs to the ArgJ family. As to quaternary structure, heterotetramer of two alpha and two beta chains.

The protein resides in the cytoplasm. It catalyses the reaction N(2)-acetyl-L-ornithine + L-glutamate = N-acetyl-L-glutamate + L-ornithine. The enzyme catalyses L-glutamate + acetyl-CoA = N-acetyl-L-glutamate + CoA + H(+). Its pathway is amino-acid biosynthesis; L-arginine biosynthesis; L-ornithine and N-acetyl-L-glutamate from L-glutamate and N(2)-acetyl-L-ornithine (cyclic): step 1/1. It functions in the pathway amino-acid biosynthesis; L-arginine biosynthesis; N(2)-acetyl-L-ornithine from L-glutamate: step 1/4. Catalyzes two activities which are involved in the cyclic version of arginine biosynthesis: the synthesis of N-acetylglutamate from glutamate and acetyl-CoA as the acetyl donor, and of ornithine by transacetylation between N(2)-acetylornithine and glutamate. This chain is Arginine biosynthesis bifunctional protein ArgJ 1, found in Streptomyces clavuligerus.